The primary structure comprises 505 residues: Trans-cinnamate 4-monooxygenase (505 aa).

The helical transmembrane segment at 3–23 (LILLEKSLLAVFFAVIFSIIV) threads the bilayer. Residues 213–218 (RSRLAQ) and A306 contribute to the (E)-cinnamate site. Residue C447 coordinates heme.

Belongs to the cytochrome P450 family. Requires heme as cofactor. Mostly expressed in stems, and, to a lower extent, in bulbs, roots, leaves and flowers.

It localises to the membrane. The enzyme catalyses (E)-cinnamate + reduced [NADPH--hemoprotein reductase] + O2 = (E)-4-coumarate + oxidized [NADPH--hemoprotein reductase] + H2O + H(+). It functions in the pathway alkaloid biosynthesis. It participates in phenylpropanoid metabolism; trans-4-coumarate biosynthesis; trans-4-coumarate from trans-cinnamate: step 1/1. Catalyzes the first oxidative step of the phenylpropanoid pathway in higher plants by transforming trans-cinnamate into p-coumarate. The compounds formed by this pathway are essential components for lignification, pollination, and defense against ultraviolet light, predators and pathogens. Trans-4-coumarate is a precursor to all amaryllidaceae alkaloids such as galanthamine, lycorine and haemanthamine, and including haemanthamine- and crinamine-type alkaloids, promising anticancer agents. This is Trans-cinnamate 4-monooxygenase from Narcissus pseudonarcissus (Daffodil).